The primary structure comprises 457 residues: MLDIKLIRENPDLVKGDLIKRGEIEKIKWIDEILELDKKWRENLRKINQLRKERNQLAVQIGKRKKAGEPIDDLLAKSNEIVKQIETLEKEVEELRAKIDYYLWRLPNITHESVPIGKDDSENVPIRFWGKAKVWEGFLETFKEQSLGKMDYEVIDWRPRLHVDMLEILRGADIERAAKVSGSRFYYLLNELVILDLALIRFALDKLIEKGFIPVIPPYMVRRYVEEGVTSFGDFEDVIYKVEGEDLYLIPTAEHPLAGMHANEILEGKDLPLLYVGISPCFRKEAGTAGKDTKGIFRVHQFHKVEQFVYSRPEESWEWHEKLIQNAEEIFQELEIPYRVVNICTGDLGYVAAKKYDIEAWMAGQGKFREVVSASNCTEWQARRLNIRYRDKTHEKPKFVHTLNSTAIATSRAIVAILENHQTEEGVVKLPKVLWKYTGFKEILPAHMKEKCCQGLE.

Residue 252-254 participates in L-serine binding; the sequence is TAE. ATP-binding positions include 283–285 and Val299; that span reads RKE. Glu306 contributes to the L-serine binding site. 370 to 373 is a binding site for ATP; the sequence is EVVS. Residue Thr406 coordinates L-serine.

Belongs to the class-II aminoacyl-tRNA synthetase family. Type-1 seryl-tRNA synthetase subfamily. As to quaternary structure, homodimer. The tRNA molecule binds across the dimer.

The protein resides in the cytoplasm. It carries out the reaction tRNA(Ser) + L-serine + ATP = L-seryl-tRNA(Ser) + AMP + diphosphate + H(+). It catalyses the reaction tRNA(Sec) + L-serine + ATP = L-seryl-tRNA(Sec) + AMP + diphosphate + H(+). It participates in aminoacyl-tRNA biosynthesis; selenocysteinyl-tRNA(Sec) biosynthesis; L-seryl-tRNA(Sec) from L-serine and tRNA(Sec): step 1/1. In terms of biological role, catalyzes the attachment of serine to tRNA(Ser). Is also able to aminoacylate tRNA(Sec) with serine, to form the misacylated tRNA L-seryl-tRNA(Sec), which will be further converted into selenocysteinyl-tRNA(Sec). This is Serine--tRNA ligase from Thermococcus onnurineus (strain NA1).